Consider the following 98-residue polypeptide: MKKKQIEFENELRSMLATALEKDISQEERNALNIAEKALDNSEYLPKIILNLRKALTPLAINRTLNHDLSELYKFITSSKASNKNLGGGLIMSWGRLF.

Imparts immunity to lactococcin-A to naturally sensitive host strains. The polypeptide is Lactococcin-A immunity protein (lciA) (Lactococcus lactis subsp. cremoris (Streptococcus cremoris)).